The primary structure comprises 431 residues: Histidinol dehydrogenase (431 aa).

The NAD(+) site is built by Y130, Q192, and N215. Residues S238, Q260, and H263 each contribute to the substrate site. 2 residues coordinate Zn(2+): Q260 and H263. Catalysis depends on proton acceptor residues E328 and H329. Substrate is bound by residues H329, D362, E416, and H421. A Zn(2+)-binding site is contributed by D362. H421 contacts Zn(2+).

Belongs to the histidinol dehydrogenase family. The cofactor is Zn(2+).

The catalysed reaction is L-histidinol + 2 NAD(+) + H2O = L-histidine + 2 NADH + 3 H(+). Its pathway is amino-acid biosynthesis; L-histidine biosynthesis; L-histidine from 5-phospho-alpha-D-ribose 1-diphosphate: step 9/9. Functionally, catalyzes the sequential NAD-dependent oxidations of L-histidinol to L-histidinaldehyde and then to L-histidine. This chain is Histidinol dehydrogenase, found in Thermosynechococcus vestitus (strain NIES-2133 / IAM M-273 / BP-1).